The primary structure comprises 294 residues: MRFVIVTGLSGAGKTQAIRSLEDLGFFCVDNLPPTLIPKFAEACYQTEGKIKKIALVIDIRGGKFFDDLFESLKYLKEEGYKYEILFLDASDEVLIKRFKESRRKHPLSPDGRILNGISMERNRLREVKDRADNIINTSELATRELREAINEIYGEQDQIENQLVITVLSFGFKYGIPLDSDLVFDVRFLPNPYYIKELKQYSGKDKKVSDYVMSFDVTNKFVNRLEDMLDFLIPNYFKEGKRQLIISIGCTGGRHRSVAIANAIYEGLKSKGHEVNIDHRDINEDIHKGGKKL.

ATP is bound at residue Gly-8–Thr-15. Asp-59–Gly-62 provides a ligand contact to GTP.

Belongs to the RapZ-like family.

In terms of biological role, displays ATPase and GTPase activities. The polypeptide is Nucleotide-binding protein CLK_2809 (Clostridium botulinum (strain Loch Maree / Type A3)).